A 195-amino-acid chain; its full sequence is Interferon tau-9 (195 aa).

A signal peptide spans 1-23 (MAFVLSLLMALVLVSYGPGGSLG). 2 disulfides stabilise this stretch: Cys24–Cys122 and Cys52–Cys162.

It belongs to the alpha/beta interferon family. IFN-alphaII subfamily. Constitutively and exclusively expressed in the mononuclear cells of the extraembryonic trophectoderm.

The protein resides in the secreted. Its function is as follows. Paracrine hormone primarily responsible for maternal recognition of pregnancy. Interacts with endometrial receptors, probably type I interferon receptors, and blocks estrogen receptor expression, preventing the estrogen-induced increase in oxytocin receptor expression in the endometrium. This results in the suppression of the pulsatile endometrial release of the luteolytic hormone prostaglandin F2-alpha, hindering the regression of the corpus luteum (luteolysis) and therefore a return to ovarian cyclicity. This, and a possible direct effect of IFN-tau on prostaglandin synthesis, leads in turn to continued ovarian progesterone secretion, which stimulates the secretion by the endometrium of the nutrients required for the growth of the conceptus. In summary, displays particularly high antiviral and antiproliferative potency concurrently with particular weak cytotoxicity, high antiluteolytic activity and immunomodulatory properties. In contrast with other IFNs, IFN-tau is not virally inducible. The chain is Interferon tau-9 (IFNT9) from Ovis aries (Sheep).